Here is a 254-residue protein sequence, read N- to C-terminus: Probable transcriptional regulatory protein HDEF_0869 (254 aa).

The tract at residues 1–20 (MAGHSKWANTKHRKAAQDAK) is disordered.

Belongs to the TACO1 family.

The protein resides in the cytoplasm. This chain is Probable transcriptional regulatory protein HDEF_0869, found in Hamiltonella defensa subsp. Acyrthosiphon pisum (strain 5AT).